The chain runs to 379 residues: Homoserine O-succinyltransferase (379 aa).

The AB hydrolase-1 domain occupies 51 to 360; that stretch reads NAVLICHALS…DAPQGHDAFL (310 aa). Catalysis depends on Ser-157, which acts as the Nucleophile. Position 227 (Arg-227) interacts with substrate. Residues Asp-323 and His-356 contribute to the active site. A substrate-binding site is contributed by Asp-357.

It belongs to the AB hydrolase superfamily. MetX family. As to quaternary structure, homodimer.

It is found in the cytoplasm. It carries out the reaction L-homoserine + succinyl-CoA = O-succinyl-L-homoserine + CoA. Its pathway is amino-acid biosynthesis; L-methionine biosynthesis via de novo pathway; O-succinyl-L-homoserine from L-homoserine: step 1/1. Functionally, transfers a succinyl group from succinyl-CoA to L-homoserine, forming succinyl-L-homoserine. In Pseudomonas fluorescens (strain SBW25), this protein is Homoserine O-succinyltransferase.